The primary structure comprises 422 residues: Probable protein phosphatase 2C 69 (422 aa).

One can recognise a PPM-type phosphatase domain in the interval 45-294 (TLLLAEAGER…DDTTCIVVDI (250 aa)). 4 residues coordinate Mn(2+): D70, G71, D246, and D285.

This sequence belongs to the PP2C family. Mg(2+) is required as a cofactor. The cofactor is Mn(2+).

The enzyme catalyses O-phospho-L-seryl-[protein] + H2O = L-seryl-[protein] + phosphate. It carries out the reaction O-phospho-L-threonyl-[protein] + H2O = L-threonyl-[protein] + phosphate. The sequence is that of Probable protein phosphatase 2C 69 from Oryza sativa subsp. japonica (Rice).